The chain runs to 111 residues: uncharacterized protein (111 aa).

2 helical membrane-spanning segments follow: residues 18–38 (LNVF…LFVS) and 42–62 (LALA…RTFP).

The protein localises to the membrane. This is an uncharacterized protein from Saccharomyces cerevisiae (strain ATCC 204508 / S288c) (Baker's yeast).